The chain runs to 165 residues: Putative 4-hydroxy-4-methyl-2-oxoglutarate aldolase (165 aa).

Substrate is bound by residues 80–83 (GGNL) and R102. D103 serves as a coordination point for a divalent metal cation.

This sequence belongs to the class II aldolase/RraA-like family. Homotrimer. A divalent metal cation serves as cofactor.

The catalysed reaction is 4-hydroxy-4-methyl-2-oxoglutarate = 2 pyruvate. It carries out the reaction oxaloacetate + H(+) = pyruvate + CO2. Its function is as follows. Catalyzes the aldol cleavage of 4-hydroxy-4-methyl-2-oxoglutarate (HMG) into 2 molecules of pyruvate. Also contains a secondary oxaloacetate (OAA) decarboxylase activity due to the common pyruvate enolate transition state formed following C-C bond cleavage in the retro-aldol and decarboxylation reactions. The sequence is that of Putative 4-hydroxy-4-methyl-2-oxoglutarate aldolase from Cupriavidus necator (strain ATCC 17699 / DSM 428 / KCTC 22496 / NCIMB 10442 / H16 / Stanier 337) (Ralstonia eutropha).